The primary structure comprises 486 residues: Cobyric acid synthase (486 aa).

Residues 248 to 439 (MLRVVVPVLP…VHGLFDTPAA (192 aa)) form the GATase cobBQ-type domain. The Nucleophile role is filled by Cys329. Residue His431 is part of the active site.

It belongs to the CobB/CobQ family. CobQ subfamily.

It participates in cofactor biosynthesis; adenosylcobalamin biosynthesis. In terms of biological role, catalyzes amidations at positions B, D, E, and G on adenosylcobyrinic A,C-diamide. NH(2) groups are provided by glutamine, and one molecule of ATP is hydrogenolyzed for each amidation. The polypeptide is Cobyric acid synthase (Paraburkholderia phytofirmans (strain DSM 17436 / LMG 22146 / PsJN) (Burkholderia phytofirmans)).